Reading from the N-terminus, the 354-residue chain is MMNKNKKLMVMAGGTGGHVFPGLAVAKQLQQQGWQIRWLGTADRMEAELVPKHGIEIDFIQVKGLRGQGLMRLLKAPFQIVNAILQARRHLLAYQPDAVLGMGGYVSGPGGIAAWLMGIPVVLHEQNAVAGLTNQWLAKIARRVFQAFPGAFADAPVVGNPVRQDVVQLAAPEQRFATRNGAIRILVMGGSQGARILNQTLPAVMAALGEGYEIRHQAGKNSQQDVAEAYAAAGVESAQVTEFIDDVADAYAWADLLICRSGALTVSEVSAAGVGAIFIPFMHKDRQQALNADHLVACGAAKMIEQPDLSVEKLTQMVRELDRAQLLSMAQKARQAAKLDADKVVAQAIIAITE.

UDP-N-acetyl-alpha-D-glucosamine is bound by residues 15-17 (TGG), Asn127, Arg163, Ser191, Ile244, 263-268 (ALTVSE), and Gln288.

The protein belongs to the glycosyltransferase 28 family. MurG subfamily.

Its subcellular location is the cell inner membrane. The enzyme catalyses di-trans,octa-cis-undecaprenyl diphospho-N-acetyl-alpha-D-muramoyl-L-alanyl-D-glutamyl-meso-2,6-diaminopimeloyl-D-alanyl-D-alanine + UDP-N-acetyl-alpha-D-glucosamine = di-trans,octa-cis-undecaprenyl diphospho-[N-acetyl-alpha-D-glucosaminyl-(1-&gt;4)]-N-acetyl-alpha-D-muramoyl-L-alanyl-D-glutamyl-meso-2,6-diaminopimeloyl-D-alanyl-D-alanine + UDP + H(+). It functions in the pathway cell wall biogenesis; peptidoglycan biosynthesis. Cell wall formation. Catalyzes the transfer of a GlcNAc subunit on undecaprenyl-pyrophosphoryl-MurNAc-pentapeptide (lipid intermediate I) to form undecaprenyl-pyrophosphoryl-MurNAc-(pentapeptide)GlcNAc (lipid intermediate II). This is UDP-N-acetylglucosamine--N-acetylmuramyl-(pentapeptide) pyrophosphoryl-undecaprenol N-acetylglucosamine transferase from Vibrio cholerae serotype O1 (strain ATCC 39541 / Classical Ogawa 395 / O395).